The primary structure comprises 562 residues: Probable sesquiterpene synthase (562 aa).

Positions 315, 319, and 467 each coordinate Mg(2+). The DDXXD motif signature appears at 315 to 319 (DDIYD).

Belongs to the terpene synthase family. Tpsa subfamily. Mg(2+) is required as a cofactor. The cofactor is Mn(2+).

Functionally, sesquiterpene synthase. This Santalum spicatum (Australian sandalwood) protein is Probable sesquiterpene synthase (SesquiTPS).